Consider the following 99-residue polypeptide: Prostate and testis expressed protein 14 (99 aa).

Positions 1-21 are cleaved as a signal peptide; the sequence is MGKNILLLLLGLSFVIGFLQA. The UPAR/Ly6 domain occupies 22-99; it reads LRCLECDMLN…CHDQSLCNEF (78 aa). 5 disulfides stabilise this stretch: Cys-24–Cys-51, Cys-27–Cys-36, Cys-43–Cys-69, Cys-73–Cys-89, and Cys-90–Cys-96. A glycan (N-linked (GlcNAc...) asparagine) is linked at Asn-40. N-linked (GlcNAc...) asparagine glycosylation is found at Asn-75 and Asn-82.

It belongs to the PATE family. As to quaternary structure, monomer.

It is found in the secreted. The chain is Prostate and testis expressed protein 14 from Rattus norvegicus (Rat).